Reading from the N-terminus, the 502-residue chain is High affinity nitrate transporter 2.5 (502 aa).

12 consecutive transmembrane segments (helical) span residues 51–71 (WFQF…LPVI), 87–107 (IASV…CDLF), 111–131 (LASA…AGIK), 133–153 (PIGF…FVST), 172–192 (IAAG…PIVF), 208–228 (IAFF…LLFG), 264–284 (WITA…DNII), 300–320 (GIIA…GGIF), 334–354 (LWAW…LGQI), 361–381 (IIVM…TFGV), 393–413 (VSGM…LIFF), and 423–443 (GITL…LIYF). Residues 477-502 (LHIGSQKFAETSISERGRATTTHPQT) form a disordered region.

This sequence belongs to the major facilitator superfamily. Nitrate/nitrite porter (TC 2.A.1.8) family. In terms of assembly, oligomeric molecular complex with NRT3.1. Expressed in roots, shoots and seeds. Expressed in leaves. Expressed in root hair zone of the primary root and the lateral roots, but not in the lateral root tip or in older parts of the roots. Detected mainly in the epidermis and the cortex. Expressed in shoots only in higher-order veins.

It localises to the cell membrane. Functionally, nitrate transporter involved in the constitutive high-affinity transport system (cHATS) under long-term N starvation conditions. Predominantly expressed in roots of nitrate-deprived plants as a 150 kDa molecular complex with NRT3.1 representing the major contributor to cHATS influx. The principal role of this cHATS is to enable roots previously deprived of nitrate to absorb this ion and initiate induction of nitrate-inducible genes. Not involved in transfer of nitrate from roots to shoots. Contributes to phloem loading of nitrate in shoots during N starvation, but not required for growth and nitrate uptake in young plants. Required for the nitrate uptake-independent plant growth promotion and lateral root response to the rhizospheric Phyllobacterium. Might be involved in the transfer of nitrate from stored pools to cytoplasm. The sequence is that of High affinity nitrate transporter 2.5 (NRT2.5) from Arabidopsis thaliana (Mouse-ear cress).